The chain runs to 199 residues: Urease accessory protein UreG (199 aa).

8 to 15 (GPVGSGKT) is a GTP binding site.

It belongs to the SIMIBI class G3E GTPase family. UreG subfamily. As to quaternary structure, homodimer. UreH, UreF and UreG form a complex that acts as a GTP-hydrolysis-dependent molecular chaperone, activating the urease apoprotein by helping to assemble the nickel containing metallocenter of UreC. The UreE protein probably delivers the nickel.

The protein localises to the cytoplasm. In terms of biological role, facilitates the functional incorporation of the urease nickel metallocenter. This process requires GTP hydrolysis, probably effectuated by UreG. This Helicobacter pylori (strain J99 / ATCC 700824) (Campylobacter pylori J99) protein is Urease accessory protein UreG.